Consider the following 1408-residue polypeptide: ARF guanine-nucleotide exchange factor 1 (1408 aa).

Ser49 is subject to Phosphoserine. Residues 262 to 287 (TTTSDNDLSSTDDDSAVADDNKNEKP) form a disordered region. In terms of domain architecture, SEC7 spans 552–706 (FNEKAKKGIQ…IIMLNTDSHN (155 aa)).

Interacts (via N-terminal region) with SEC21 (via C-terminus). Interacts with GMH1. Interacts with DRS2.

It localises to the cytoplasm. The protein localises to the cytosol. Its subcellular location is the membrane. The protein resides in the endoplasmic reticulum. It is found in the mitochondrion. Its function is as follows. Activates the ARF proteins by exchanging bound GDP for free GTP. Plays a role in maintaining mitochondrial morphology, and in the turnover of mitochondria through mitophagy. The sequence is that of ARF guanine-nucleotide exchange factor 1 (GEA1) from Saccharomyces cerevisiae (strain ATCC 204508 / S288c) (Baker's yeast).